The sequence spans 346 residues: Aspartate-semialdehyde dehydrogenase (346 aa).

NADP(+) contacts are provided by residues 12-15 (SGAV) and 40-41 (RS). Residue arginine 101 coordinates phosphate. Residue cysteine 131 is the Acyl-thioester intermediate of the active site. Glutamine 158 provides a ligand contact to substrate. 161 to 162 (SG) lines the NADP(+) pocket. Lysine 225 provides a ligand contact to phosphate. Substrate is bound at residue arginine 246. Catalysis depends on histidine 253, which acts as the Proton acceptor. Position 326 (glutamine 326) interacts with NADP(+).

Belongs to the aspartate-semialdehyde dehydrogenase family. In terms of assembly, homodimer.

The catalysed reaction is L-aspartate 4-semialdehyde + phosphate + NADP(+) = 4-phospho-L-aspartate + NADPH + H(+). Its pathway is amino-acid biosynthesis; L-lysine biosynthesis via DAP pathway; (S)-tetrahydrodipicolinate from L-aspartate: step 2/4. The protein operates within amino-acid biosynthesis; L-methionine biosynthesis via de novo pathway; L-homoserine from L-aspartate: step 2/3. It functions in the pathway amino-acid biosynthesis; L-threonine biosynthesis; L-threonine from L-aspartate: step 2/5. Functionally, catalyzes the NADPH-dependent formation of L-aspartate-semialdehyde (L-ASA) by the reductive dephosphorylation of L-aspartyl-4-phosphate. This Helicobacter pylori (strain ATCC 700392 / 26695) (Campylobacter pylori) protein is Aspartate-semialdehyde dehydrogenase.